An 87-amino-acid chain; its full sequence is Phosphoribosyl-ATP pyrophosphatase (87 aa).

This sequence belongs to the PRA-PH family.

The protein resides in the cytoplasm. It carries out the reaction 1-(5-phospho-beta-D-ribosyl)-ATP + H2O = 1-(5-phospho-beta-D-ribosyl)-5'-AMP + diphosphate + H(+). It functions in the pathway amino-acid biosynthesis; L-histidine biosynthesis; L-histidine from 5-phospho-alpha-D-ribose 1-diphosphate: step 2/9. In Salinibacter ruber (strain DSM 13855 / M31), this protein is Phosphoribosyl-ATP pyrophosphatase.